The chain runs to 703 residues: Harmonin-binding protein USHBP1 (703 aa).

Residues 1–15 (MSARATRPRSRRGRH) are compositionally biased toward basic residues. 2 disordered regions span residues 1-113 (MSAR…PPGN) and 138-172 (HQPP…CQRE). Residues 189–227 (SREDELVRTQASLEAIRAEKETLQKEVQELQDSLLRLEP) adopt a coiled-coil conformation. The disordered stretch occupies residues 228-256 (CPHLSHNQAGGSGSGSSSSEADREPWETQ). Residues 289–309 (EMHIMEAQMEQLRGSIEKLKC) are a coiled coil. The segment at 396-416 (MDAGAQQNPQPSPEGSSVDKP) is disordered. Over residues 400–410 (AQQNPQPSPEG) the composition is skewed to polar residues. Positions 476–513 (RLEKTQIQQDLVAAREALADLMLRLQLVRREKRGLELR) form a coiled coil. Residues 540–583 (AGGANSSGGHSSGGGSSGDEEEWYQGLPAVPGGTSGIDGGQVGR) are disordered. The segment covering 572–581 (GTSGIDGGQV) has biased composition (gly residues). A coiled-coil region spans residues 596–681 (ASLTRTLDLQ…QAEEVAVLEA (86 aa)).

It belongs to the MCC family. As to quaternary structure, interacts via its C-terminus with the first PDZ domain of USH1C. Highest level of expression in heart, and moderate to low expression in skeletal muscle, kidney, liver, small intestine, placenta and lung.

This Homo sapiens (Human) protein is Harmonin-binding protein USHBP1.